A 37-amino-acid chain; its full sequence is Albumin-2 (37 aa).

The stretch at 6–37 (IANFSVLNXEAYLFINDKYVLLDYAPGTXNDK) is one Hemopexin repeat.

Dimer. In terms of tissue distribution, expressed in seeds (at protein level).

The protein localises to the cytoplasm. It localises to the cytosol. Its function is as follows. Binds hemin and thiamine. In Lens culinaris (Lentil), this protein is Albumin-2.